A 64-amino-acid polypeptide reads, in one-letter code: Delta-buthitoxin-Hj2a (64 aa).

Cystine bridges form between C12/C63, C16/C36, C22/C46, and C26/C48. R64 is subject to Arginine amide.

Belongs to the long (4 C-C) scorpion toxin superfamily. Sodium channel inhibitor family. Alpha subfamily. Expressed by the venom gland.

The protein localises to the secreted. This non-amidated recombinant toxin slows fast inactivation on Nav1.1/SCN1A (EC(50)=52.8 nM), Nav1.4/SN4A (EC(50)=32 nM), Nav1.5/SCN5A (EC(50)=116.7 nM), Nav1.6/SCN8A (EC(50)=46.3 nM), and Nav1.7/SCN9A (EC(50)=147.4 nM) voltage-gated sodium channels. On Nav1.1/SCN1A channel, acts as an agonist by inducing a shift in both the voltage dependence of channel inactivation (alpha-toxin activity) and activation (beta-toxin activity). The polypeptide is Delta-buthitoxin-Hj2a (Hottentotta judaicus (Black scorpion)).